We begin with the raw amino-acid sequence, 561 residues long: Urocanate hydratase (561 aa).

NAD(+) contacts are provided by residues 52–53, Gln130, 176–178, Glu196, Arg201, 242–243, 263–267, 273–274, and Tyr322; these read GG, GMG, NA, QTSAH, and YL. Cys410 is an active-site residue. Gly492 serves as a coordination point for NAD(+).

It belongs to the urocanase family. It depends on NAD(+) as a cofactor.

Its subcellular location is the cytoplasm. It carries out the reaction 4-imidazolone-5-propanoate = trans-urocanate + H2O. The protein operates within amino-acid degradation; L-histidine degradation into L-glutamate; N-formimidoyl-L-glutamate from L-histidine: step 2/3. Catalyzes the conversion of urocanate to 4-imidazolone-5-propionate. This is Urocanate hydratase from Citrobacter koseri (strain ATCC BAA-895 / CDC 4225-83 / SGSC4696).